The following is a 102-amino-acid chain: DSSESNEIEDVLFLGRQDANSFMRQPRPPNHWDSRDRFKSPRERTREKCEEYRPCERLARQVGLKRAYGKYFGNRRQRPSTSGRLRPRKYRASRYRNHHYRY.

3 positions are modified to phosphoserine: Ser2, Ser3, and Ser5. Residues 18 to 45 are disordered; that stretch reads DANSFMRQPRPPNHWDSRDRFKSPRERT. The 47-residue stretch at 27–73 folds into the Gla domain; sequence RPPNHWDSRDRFKSPRERTREKCEEYRPCERLARQVGLKRAYGKYFG. A compositionally biased stretch (basic and acidic residues) spans 30-45; sequence NHWDSRDRFKSPRERT. 4-carboxyglutamate is present on residues Glu43, Glu47, Glu50, and Glu51. Cys49 and Cys55 are disulfide-bonded. The tract at residues 72-102 is disordered; the sequence is FGNRRQRPSTSGRLRPRKYRASRYRNHHYRY. A compositionally biased stretch (basic residues) spans 85-102; the sequence is LRPRKYRASRYRNHHYRY.

The protein belongs to the osteocalcin/matrix Gla protein family. Requires vitamin K-dependent gamma-carboxylation for its function. As to expression, accounts for 35-40% of the total protein in the acid demineralization extract of calcified cartilage.

The protein localises to the secreted. Functionally, associates with the organic matrix of calcified cartilage. This Galeorhinus galeus (Tope shark) protein is Matrix Gla protein (mgp).